A 301-amino-acid chain; its full sequence is uncharacterized protein (301 aa).

Belongs to the asfivirus E301R family. As to quaternary structure, interacts with host IRF3.

Its function is as follows. Plays a role in the inhibition of host innate immune system by acting as a negatively regulator of type I interferon production. Mechanistically, interacts with and prevents host IRF3 nuclear localization to inhibit its transcriptional activity. This is an uncharacterized protein from Ornithodoros (relapsing fever ticks).